The following is a 1284-amino-acid chain: Kinesin-like protein KIN-4C (1284 aa).

Residues 12-364 form the Kinesin motor domain; the sequence is SVKVVVNIRP…LKYANRARNI (353 aa). 91-98 lines the ATP pocket; that stretch reads GQTGSGKT. Coiled coils occupy residues 407-445, 561-711, and 911-950; these read SAAL…EQLA, RDHS…QFRS, and MCKE…NMLL. Disordered regions lie at residues 1040 to 1070 and 1158 to 1284; these read RRQT…SQEK and MSEK…NHLR. The segment covering 1043–1070 has biased composition (polar residues); the sequence is TVSSHLNPNPGSGTTQKSAKSEMASQEK. 2 stretches are compositionally biased toward basic and acidic residues: residues 1158 to 1172 and 1275 to 1284; these read MSEK…RKPL and NANEKENHLR.

This sequence belongs to the TRAFAC class myosin-kinesin ATPase superfamily. Kinesin family. KIN-4 subfamily. As to quaternary structure, homodimer.

In terms of biological role, microtubule-dependent motor protein involved in the control of the oriented deposition of cellulose microfibrils. This chain is Kinesin-like protein KIN-4C, found in Oryza sativa subsp. japonica (Rice).